Here is a 142-residue protein sequence, read N- to C-terminus: Hemoglobin subunit alpha (142 aa).

Residues 2–142 enclose the Globin domain; the sequence is VLSSADKNNV…VSTVLTSKYR (141 aa). At Ser4 the chain carries Phosphoserine. N6-succinyllysine occurs at positions 8 and 12. N6-acetyllysine; alternate is present on Lys17. Lys17 carries the post-translational modification N6-succinyllysine; alternate. Tyr25 is subject to Phosphotyrosine. Phosphoserine is present on Ser36. At Lys41 the chain carries N6-succinyllysine. Ser50 bears the Phosphoserine mark. Position 59 (His59) interacts with O2. His88 is a binding site for heme b. Position 103 is a phosphoserine (Ser103). Position 109 is a phosphothreonine (Thr109). Ser125 bears the Phosphoserine mark. Phosphothreonine occurs at positions 135 and 138. Ser139 is subject to Phosphoserine.

It belongs to the globin family. Heterotetramer of two alpha chains and two beta chains. Red blood cells.

Involved in oxygen transport from the lung to the various peripheral tissues. Functionally, hemopressin acts as an antagonist peptide of the cannabinoid receptor CNR1. Hemopressin-binding efficiently blocks cannabinoid receptor CNR1 and subsequent signaling. This chain is Hemoglobin subunit alpha (HBA), found in Panthera leo (Lion).